A 136-amino-acid chain; its full sequence is ATP synthase F(0) complex subunit C1, mitochondrial (136 aa).

The N-terminal 61 residues, 1–61 (MQTTGALLIS…REFQTSVVSR (61 aa)), are a transit peptide targeting the mitochondrion. Residues 77 to 97 (VGVAGSGAGIGTVFGSLIIGY) form a helical membrane-spanning segment. Residue lysine 104 is modified to N6,N6,N6-trimethyllysine. Residues 112-132 (ILGFALSEAMGLFCLMVAFLI) traverse the membrane as a helical segment.

It belongs to the ATPase C chain family. Homooctamer; the c-ring consists of eight c subunits forming a circle, and each subunit adopts a hairpin shape. Component of the ATP synthase complex composed at least of ATP5F1A/subunit alpha, ATP5F1B/subunit beta, ATP5MC1/subunit c (homooctomer), MT-ATP6/subunit a, MT-ATP8/subunit 8, ATP5ME/subunit e, ATP5MF/subunit f, ATP5MG/subunit g, ATP5MK/subunit k, ATP5MJ/subunit j, ATP5F1C/subunit gamma, ATP5F1D/subunit delta, ATP5F1E/subunit epsilon, ATP5PF/subunit F6, ATP5PB/subunit b, ATP5PD/subunit d, ATP5PO/subunit OSCP. ATP synthase complex consists of a soluble F(1) head domain (subunits alpha(3) and beta(3)) - the catalytic core - and a membrane F(0) domain - the membrane proton channel (subunits c, a, 8, e, f, g, k and j). These two domains are linked by a central stalk (subunits gamma, delta, and epsilon) rotating inside the F1 region and a stationary peripheral stalk (subunits F6, b, d, and OSCP). Interacts with TMEM70 (homooligomer form); this interaction facilitates the oligomer formation of subunit c/ATP5MC1 (c-ring) and the c-ring membrane insertion and also protects ATP5MC1 against intramitochondrial proteolysis. Trimethylated by ATPSCKMT at Lys-104. Methylation is required for proper incorporation of the C subunit into the ATP synthase complex and mitochondrial respiration.

It localises to the mitochondrion membrane. It catalyses the reaction H(+)(in) = H(+)(out). Subunit c, of the mitochondrial membrane ATP synthase complex (F(1)F(0) ATP synthase or Complex V) that produces ATP from ADP in the presence of a proton gradient across the membrane which is generated by electron transport complexes of the respiratory chain. ATP synthase complex consist of a soluble F(1) head domain - the catalytic core - and a membrane F(1) domain - the membrane proton channel. These two domains are linked by a central stalk rotating inside the F(1) region and a stationary peripheral stalk. During catalysis, ATP synthesis in the catalytic domain of F(1) is coupled via a rotary mechanism of the central stalk subunits to proton translocation. With the subunit a (MT-ATP6), forms the proton-conducting channel in the F(0) domain, that contains two crucial half-channels (inlet and outlet) that facilitate proton movement from the mitochondrial intermembrane space (IMS) into the matrix. Protons are taken up via the inlet half-channel and released through the outlet half-channel, following a Grotthuss mechanism. This chain is ATP synthase F(0) complex subunit C1, mitochondrial, found in Ovis aries (Sheep).